The following is a 796-amino-acid chain: Probable phosphoketolase (796 aa).

Belongs to the XFP family. The cofactor is thiamine diphosphate.

The sequence is that of Probable phosphoketolase from Streptomyces coelicolor (strain ATCC BAA-471 / A3(2) / M145).